A 128-amino-acid chain; its full sequence is MKKIIATALIAGSAILGLSACTSDADVASENVSKAADNFEINRRIVFFNGITDKYLLEIQGRCSINADTASKKLDVTCKTKDGIKKHFLGLSDNVSYFMEQVDGANVSTDFYQVNFKPQAILPDIELR.

In Mycobacterium phage L5 (Mycobacteriophage L5), this protein is Gene 64 protein (64).